A 282-amino-acid chain; its full sequence is Bis(5'-nucleosyl)-tetraphosphatase, symmetrical (282 aa).

Belongs to the Ap4A hydrolase family.

The enzyme catalyses P(1),P(4)-bis(5'-adenosyl) tetraphosphate + H2O = 2 ADP + 2 H(+). In terms of biological role, hydrolyzes diadenosine 5',5'''-P1,P4-tetraphosphate to yield ADP. In Sodalis glossinidius (strain morsitans), this protein is Bis(5'-nucleosyl)-tetraphosphatase, symmetrical.